Here is a 199-residue protein sequence, read N- to C-terminus: NAD(P)H dehydrogenase (quinone) (199 aa).

In terms of domain architecture, Flavodoxin-like spans 4-190; sequence VLVLYYSTYG…EGARHQGELI (187 aa). FMN contacts are provided by residues 10–15 and 78–80; these read STYGHV and TRF. Tyrosine 12 serves as a coordination point for NAD(+). Tryptophan 98 contacts substrate. FMN-binding positions include 113-119 and histidine 134; that span reads STATQHG.

It belongs to the WrbA family. FMN serves as cofactor.

It carries out the reaction a quinone + NADH + H(+) = a quinol + NAD(+). It catalyses the reaction a quinone + NADPH + H(+) = a quinol + NADP(+). The polypeptide is NAD(P)H dehydrogenase (quinone) (Cupriavidus metallidurans (strain ATCC 43123 / DSM 2839 / NBRC 102507 / CH34) (Ralstonia metallidurans)).